A 1403-amino-acid polypeptide reads, in one-letter code: MATQQKASDERISQFDHNLLPELSALLGLDAVQLAKELEEEEQKERAKMQKGYNSQMRSEAKRLKTFVTYEPYSSWIPQEMAAAGFYFTGVKSGIQCFCCSLILFGAGLTRLPIEDHKRFHPDCGFLLNKDVGNIAKYDIRVKNLKSRLRGGKMRYQEEEARLASFRNWPFYVQGISPCVLSEAGFVFTGKQDTVQCFSCGGCLGNWEEGDDPWKEHAKWFPKCEFLRSKKSSEEITQYIQSYKGFVDITGEHFVNSWVQRELPMASAYCNDSIFAYEELRLDSFKDWPRESAVGVAALAKAGLFYTGIKDIVQCFSCGGCLEKWQEGDDPLDDHTRCFPNCPFLQNMKSSAEVTPDLQSRGELCELLETTSESNLEDSIAVGPIVPEMAQGEAQWFQEAKNLNEQLRAAYTSASFRHMSLLDISSDLATDHLLGCDLSIASKHISKPVQEPLVLPEVFGNLNSVMCVEGEAGSGKTVLLKKIAFLWASGCCPLLNRFQLVFYLSLSSTRPDEGLASIICDQLLEKEGSVTEMCVRNIIQQLKNQVLFLLDDYKEICSIPQVIGKLIQKNHLSRTCLLIAVRTNRARDIRRYLETILEIKAFPFYNTVCILRKLFSHNMTRLRKFMVYFGKNQSLQKIQKTPLFVAAICAHWFQYPFDPSFDDVAVFKSYMERLSLRNKATAEILKATVSSCGELALKGFFSCCFEFNDDDLAEAGVDEDEDLTMCLMSKFTAQRLRPFYRFLSPAFQEFLAGMRLIELLDSDRQEHQDLGLYHLKQINSPMMTVSAYNNFLNYVSSLPSTKAGPKIVSHLLHLVDNKESLENISENDDYLKHQPEISLQMQLLRGLWQICPQAYFSMVSEHLLVLALKTAYQSNTVAACSPFVLQFLQGRTLTLGALNLQYFFDHPESLSLLRSIHFPIRGNKTSPRAHFSVLETCFDKSQVPTIDQDYASAFEPMNEWERNLAEKEDNVKSYMDMQRRASPDLSTGYWKLSPKQYKIPCLEVDVNDIDVVGQDMLEILMTVFSASQRIELHLNHSRGFIESIRPALELSKASVTKCSISKLELSAAEQELLLTLPSLESLEVSGTIQSQDQIFPNLDKFLCLKELSVDLEGNINVFSVIPEEFPNFHHMEKLLIQISAEYDPSKLVKLIQNSPNLHVFHLKCNFFSDFGSLMTMLVSCKKLTEIKFSDSFFQAVPFVASLPNFISLKILNLEGQQFPDEETSEKFAYILGSLSNLEELILPTGDGIYRVAKLIIQQCQQLHCLRVLSFFKTLNDDSVVEIAKVAISGGFQKLENLKLSINHKITEEGYRNFFQALDNMPNLQELDISRHFTECIKAQATTVKSLSQCVLRLPRLIRLNMLSWLLDADDIALLNVMKERHPQSKYLTILQKWILPFSPIIQK.

BIR repeat units follow at residues 60 to 127 (EAKR…CGFL), 159 to 227 (EEAR…CEFL), and 278 to 345 (EELR…CPFL). 4 residues coordinate Zn(2+): C315, C318, H335, and C342. The NACHT domain occupies 464–758 (SVMCVEGEAG…EFLAGMRLIE (295 aa)). An ATP-binding site is contributed by 473–478 (GSGKTV).

Interacts (via NACHT domain) with APAF1 (via CARD and NACHT domains). Interacts with C.violaceum needle protein CprI. In terms of tissue distribution, expressed in motor neurons, but not in sensory neurons. Found in liver and placenta, and to a lesser extent in spinal cord.

Functionally, anti-apoptotic protein which acts by inhibiting the activities of CASP3, CASP7 and CASP9. Can inhibit the autocleavage of pro-CASP9 and cleavage of pro-CASP3 by CASP9. Capable of inhibiting CASP9 autoproteolysis at 'Asp-315' and decreasing the rate of auto proteolysis at 'Asp-330'. Acts as a mediator of neuronal survival in pathological conditions. Prevents motor-neuron apoptosis induced by a variety of signals. Possible role in the prevention of spinal muscular atrophy that seems to be caused by inappropriate persistence of motor-neuron apoptosis: mutated or deleted forms of NAIP have been found in individuals with severe spinal muscular atrophy. Its function is as follows. Acts as a sensor component of the NLRC4 inflammasome that specifically recognizes and binds needle protein CprI from pathogenic bacteria C.violaceum. Association of pathogenic bacteria proteins drives in turn drive assembly and activation of the NLRC4 inflammasome, promoting caspase-1 activation, cytokine production and macrophage pyroptosis. The NLRC4 inflammasome is activated as part of the innate immune response to a range of intracellular bacteria such as C.violaceum and L.pneumophila. This chain is Baculoviral IAP repeat-containing protein 1 (NAIP), found in Homo sapiens (Human).